Reading from the N-terminus, the 260-residue chain is 1-(5-phosphoribosyl)-5-[(5-phosphoribosylamino)methylideneamino] imidazole-4-carboxamide isomerase (260 aa).

The active-site Proton acceptor is Asp8. Asp130 (proton donor) is an active-site residue.

Belongs to the HisA/HisF family.

The protein resides in the cytoplasm. It catalyses the reaction 1-(5-phospho-beta-D-ribosyl)-5-[(5-phospho-beta-D-ribosylamino)methylideneamino]imidazole-4-carboxamide = 5-[(5-phospho-1-deoxy-D-ribulos-1-ylimino)methylamino]-1-(5-phospho-beta-D-ribosyl)imidazole-4-carboxamide. It functions in the pathway amino-acid biosynthesis; L-histidine biosynthesis; L-histidine from 5-phospho-alpha-D-ribose 1-diphosphate: step 4/9. This chain is 1-(5-phosphoribosyl)-5-[(5-phosphoribosylamino)methylideneamino] imidazole-4-carboxamide isomerase, found in Chlorobium phaeobacteroides (strain BS1).